Consider the following 341-residue polypeptide: Phosphoribosylformylglycinamidine cyclo-ligase (341 aa).

This sequence belongs to the AIR synthase family.

Its subcellular location is the cytoplasm. It carries out the reaction 2-formamido-N(1)-(5-O-phospho-beta-D-ribosyl)acetamidine + ATP = 5-amino-1-(5-phospho-beta-D-ribosyl)imidazole + ADP + phosphate + H(+). It participates in purine metabolism; IMP biosynthesis via de novo pathway; 5-amino-1-(5-phospho-D-ribosyl)imidazole from N(2)-formyl-N(1)-(5-phospho-D-ribosyl)glycinamide: step 2/2. The sequence is that of Phosphoribosylformylglycinamidine cyclo-ligase from Thermosynechococcus vestitus (strain NIES-2133 / IAM M-273 / BP-1).